Reading from the N-terminus, the 419-residue chain is UDP-N-acetylglucosamine 1-carboxyvinyltransferase 2 (419 aa).

22–23 is a phosphoenolpyruvate binding site; it reads KN. Arg92 contributes to the UDP-N-acetyl-alpha-D-glucosamine binding site. Cys116 functions as the Proton donor in the catalytic mechanism. Cys116 is modified (2-(S-cysteinyl)pyruvic acid O-phosphothioketal). UDP-N-acetyl-alpha-D-glucosamine is bound by residues 121–125, Asp306, and Ile328; that span reads RPIDL.

The protein belongs to the EPSP synthase family. MurA subfamily.

It is found in the cytoplasm. The catalysed reaction is phosphoenolpyruvate + UDP-N-acetyl-alpha-D-glucosamine = UDP-N-acetyl-3-O-(1-carboxyvinyl)-alpha-D-glucosamine + phosphate. It participates in cell wall biogenesis; peptidoglycan biosynthesis. Its function is as follows. Cell wall formation. Adds enolpyruvyl to UDP-N-acetylglucosamine. This is UDP-N-acetylglucosamine 1-carboxyvinyltransferase 2 from Streptococcus pyogenes serotype M18 (strain MGAS8232).